The sequence spans 363 residues: Elongation factor Tu, chloroplastic (363 aa).

A tr-type G domain is found at 1–189 (TLTAAITMAL…NVDEYIPTPE (189 aa)). Residues 55 to 59 (DCPGH) and 110 to 113 (NKED) each bind GTP.

Belongs to the TRAFAC class translation factor GTPase superfamily. Classic translation factor GTPase family. EF-Tu/EF-1A subfamily.

Its subcellular location is the plastid. The protein localises to the chloroplast. The catalysed reaction is GTP + H2O = GDP + phosphate + H(+). GTP hydrolase that promotes the GTP-dependent binding of aminoacyl-tRNA to the A-site of ribosomes during protein biosynthesis. The protein is Elongation factor Tu, chloroplastic (tufA) of Gymnochlora stellata.